Reading from the N-terminus, the 1217-residue chain is Structural maintenance of chromosomes protein 3 (1217 aa).

ATP is bound at residue Gly-32–Ser-39. Lys-105, Lys-106, and Lys-140 each carry N6-acetyllysine. Coiled-coil stretches lie at residues Met-179 to Lys-350 and Lys-393 to Lys-503. Residues Leu-242–Glu-268 are disordered. Positions Asn-530–Leu-642 constitute an SMC hinge domain. Coiled-coil stretches lie at residues Tyr-669–Asn-916 and Gln-958–Gln-989. At Thr-783 the chain carries Phosphothreonine. 2 positions are modified to phosphoserine: Ser-787 and Ser-886. 5 positions are modified to phosphoserine: Ser-1013, Ser-1065, Ser-1067, Ser-1074, and Ser-1083. The tract at residues Lys-1059 to Val-1090 is disordered. Lys-1190 is modified (N6-acetyllysine).

Belongs to the SMC family. SMC3 subfamily. In terms of assembly, forms a heterodimer with SMC1A or SMC1B in cohesin complexes. Cohesin complexes are composed of the SMC1 (SMC1A or SMC1B) and SMC3 heterodimer attached via their SMC hinge domain, RAD21 which link them, and one STAG protein (STAG1, STAG2 or STAG3), which interacts with RAD21. Also found in meiosis-specific cohesin complexes. Found in a complex with SMC1A, CDCA5 and RAD21, PDS5A/SCC-112 and PDS5B/APRIN. Interacts with NUMA1, and forms a ternary complex with KIF3B and KIFAP3, suggesting a function in tethering the chromosomes to the spindle pole and in chromosome movement. Interacts with PDS5A and WAPL; regulated by SMC3 acetylation. Interacts (via SMC hinge domain) with KIAA1328 (via N- and C-terminal domains). Interacts with DDX11. Found in a cohesin complex with SMC1A, STAG1 and RAD21. The cohesin complex interacts with the cohesin loading complex subunits NIPBL/Scc2 (via HEAT repeats) and MAU2/Scc4. NIPBL directly contacts all members of the complex, RAD21, SMC1A/B, SMC3 and STAG1. Interacts with MXI1, MXD3, MXD4, SYCP2, RPGR and STAG3. Interacts with the NuRD complex component HDAC2; the interaction is direct. Post-translationally, ubiquitinated by the DCX(DCAF15) complex, leading to its degradation. Phosphorylated at Ser-1083 in a SPO11-dependent manner. In terms of processing, acetylation at Lys-105 and Lys-106 by ESCO1 is important for genome stability and S phase sister chromatid cohesion. Regulated by DSCC1, it is required for processive DNA synthesis, coupling sister chromatid cohesion establishment during S phase to DNA replication. Deacetylation by HDAC8, regulates release of the cohesin complex from chromatin.

The protein resides in the nucleus. Its subcellular location is the chromosome. It localises to the centromere. In terms of biological role, central component of cohesin, a complex required for chromosome cohesion during the cell cycle. The cohesin complex may form a large proteinaceous ring within which sister chromatids can be trapped. At anaphase, the complex is cleaved and dissociates from chromatin, allowing sister chromatids to segregate. Cohesion is coupled to DNA replication and is involved in DNA repair. The cohesin complex also plays an important role in spindle pole assembly during mitosis and in chromosomes movement. The protein is Structural maintenance of chromosomes protein 3 (SMC3) of Homo sapiens (Human).